We begin with the raw amino-acid sequence, 432 residues long: MPAIVLIGAQWGDEGKGKATDLLGGRVQWVVRYQGGNNAGHTVVLPTGENFALHLIPSGVLTPGVTNVIGNGVVVDPGVLLDELKGLEDRGVDTSRLLISADAHLLLPYHVAIDKVTERYMGNKKIGTTGRGIGPCYQDKIARIGIRVADVLDREVLTHKIEAALELKNQILVKIYNRKALDPHQVVECLLEQAEGFRHRIADTRLLLNTALEAGETVLLEGSQGTLLDVDHGTYPYVTSSNPTAGGAAVGSGIGPTRITAVLGILKAYTTRVGSGPFPTELFDENGEYLSKTGGEFGVTTGRRRRCGWFDAVIARYATRVNGITDFFLTKLDVLSSLETVPVCVGYRIDGARVNEMPMTQSDLHRAEPIYEELPGWWEDISAAREFDDLPAKARDYVLRLEELAGAHVSCIGVGPGREQAIVRRDILAARP.

GTP contacts are provided by residues 12–18 (GDEGKGK) and 40–42 (GHT). D13 (proton acceptor) is an active-site residue. Residues D13 and G40 each coordinate Mg(2+). IMP contacts are provided by residues 13-16 (DEGK), 38-41 (NAGH), T129, R143, Q224, T239, and R303. H41 acts as the Proton donor in catalysis. 299-305 (VTTGRRR) contributes to the substrate binding site. GTP is bound by residues R305, 331 to 333 (KLD), and 413 to 415 (GVG).

It belongs to the adenylosuccinate synthetase family. As to quaternary structure, homodimer. It depends on Mg(2+) as a cofactor.

It is found in the cytoplasm. The catalysed reaction is IMP + L-aspartate + GTP = N(6)-(1,2-dicarboxyethyl)-AMP + GDP + phosphate + 2 H(+). It participates in purine metabolism; AMP biosynthesis via de novo pathway; AMP from IMP: step 1/2. In terms of biological role, plays an important role in the de novo pathway of purine nucleotide biosynthesis. Catalyzes the first committed step in the biosynthesis of AMP from IMP. The polypeptide is Adenylosuccinate synthetase (Mycolicibacterium paratuberculosis (strain ATCC BAA-968 / K-10) (Mycobacterium paratuberculosis)).